Here is a 546-residue protein sequence, read N- to C-terminus: Chaperonin GroEL (546 aa).

Residues 30–33 (TLGP), K51, 87–91 (DGTTT), G415, 479–481 (NAA), and D495 contribute to the ATP site. Positions 526 to 546 (KKDEPAMPAGGGMGGMGGMDF) are disordered. A compositionally biased stretch (gly residues) spans 534–546 (AGGGMGGMGGMDF).

Belongs to the chaperonin (HSP60) family. In terms of assembly, forms a cylinder of 14 subunits composed of two heptameric rings stacked back-to-back. Interacts with the co-chaperonin GroES.

It localises to the cytoplasm. The catalysed reaction is ATP + H2O + a folded polypeptide = ADP + phosphate + an unfolded polypeptide.. Functionally, together with its co-chaperonin GroES, plays an essential role in assisting protein folding. The GroEL-GroES system forms a nano-cage that allows encapsulation of the non-native substrate proteins and provides a physical environment optimized to promote and accelerate protein folding. This chain is Chaperonin GroEL, found in Xanthomonas campestris pv. campestris (strain 8004).